An 84-amino-acid polypeptide reads, in one-letter code: Molybdopterin synthase sulfur carrier subunit (84 aa).

Glycine 84 carries the post-translational modification 1-thioglycine; alternate. Glycine 84 is modified (glycyl adenylate; alternate).

The protein belongs to the MoaD family. MOCS2A subfamily. In terms of assembly, heterotetramer; composed of 2 small (MOCS2A) and 2 large (MOCS2B) subunits. C-terminal thiocarboxylation occurs in 2 steps, it is first acyl-adenylated (-COAMP) via the hesA/moeB/thiF part of MOCS3, then thiocarboxylated (-COSH) via the rhodanese domain of MOCS3.

The protein localises to the cytoplasm. It participates in cofactor biosynthesis; molybdopterin biosynthesis. Functionally, acts as a sulfur carrier required for molybdopterin biosynthesis. Component of the molybdopterin synthase complex that catalyzes the conversion of precursor Z into molybdopterin by mediating the incorporation of 2 sulfur atoms into precursor Z to generate a dithiolene group. In the complex, serves as sulfur donor by being thiocarboxylated (-COSH) at its C-terminus by MOCS3. After interaction with MOCS2B, the sulfur is then transferred to precursor Z to form molybdopterin. This is Molybdopterin synthase sulfur carrier subunit from Caenorhabditis briggsae.